The chain runs to 130 residues: UPF0102 protein Cthe_0758 (130 aa).

This sequence belongs to the UPF0102 family.

The sequence is that of UPF0102 protein Cthe_0758 from Acetivibrio thermocellus (strain ATCC 27405 / DSM 1237 / JCM 9322 / NBRC 103400 / NCIMB 10682 / NRRL B-4536 / VPI 7372) (Clostridium thermocellum).